Consider the following 887-residue polypeptide: Cytoplasmic aconitate hydratase (887 aa).

Substrate is bound by residues Q84 and 204–206 (DSH). Residues C436, C502, and C505 each contribute to the [4Fe-4S] cluster site. Substrate contacts are provided by residues R535, R540, R697, and 777-778 (SR).

Belongs to the aconitase/IPM isomerase family. As to quaternary structure, interacts with gex-3. It depends on [4Fe-4S] cluster as a cofactor.

Its subcellular location is the cytoplasm. It is found in the cytosol. The catalysed reaction is citrate = D-threo-isocitrate. Its function is as follows. Catalyzes the isomerization of citrate to isocitrate via cis-aconitate. Has probably no RNA-binding activity. This chain is Cytoplasmic aconitate hydratase (aco-1), found in Caenorhabditis elegans.